We begin with the raw amino-acid sequence, 304 residues long: Aspartate carbamoyltransferase catalytic subunit (304 aa).

The carbamoyl phosphate site is built by Arg55 and Thr56. Lys83 provides a ligand contact to L-aspartate. Carbamoyl phosphate-binding residues include Arg105, His133, and Gln136. The L-aspartate site is built by Arg166 and Arg220. Positions 261 and 262 each coordinate carbamoyl phosphate.

It belongs to the aspartate/ornithine carbamoyltransferase superfamily. ATCase family. Heterododecamer (2C3:3R2) of six catalytic PyrB chains organized as two trimers (C3), and six regulatory PyrI chains organized as three dimers (R2).

It catalyses the reaction carbamoyl phosphate + L-aspartate = N-carbamoyl-L-aspartate + phosphate + H(+). It functions in the pathway pyrimidine metabolism; UMP biosynthesis via de novo pathway; (S)-dihydroorotate from bicarbonate: step 2/3. In terms of biological role, catalyzes the condensation of carbamoyl phosphate and aspartate to form carbamoyl aspartate and inorganic phosphate, the committed step in the de novo pyrimidine nucleotide biosynthesis pathway. This is Aspartate carbamoyltransferase catalytic subunit from Caldanaerobacter subterraneus subsp. tengcongensis (strain DSM 15242 / JCM 11007 / NBRC 100824 / MB4) (Thermoanaerobacter tengcongensis).